The primary structure comprises 370 residues: Actin-related protein 2/3 complex subunit 1A (370 aa).

6 WD repeats span residues phenylalanine 6–alanine 45, glutamate 50–threonine 89, proline 140–lysine 179, glycine 202–threonine 241, threonine 244–serine 284, and leucine 322–glutamine 365.

This sequence belongs to the WD repeat ARPC1 family. In terms of assembly, probable component of the Arp2/3 complex in which it may replace ARPC1B.

Its subcellular location is the cytoplasm. It is found in the cytoskeleton. It localises to the nucleus. Its function is as follows. Probably functions as a component of the Arp2/3 complex which is involved in regulation of actin polymerization and together with an activating nucleation-promoting factor (NPF) mediates the formation of branched actin networks. In addition to its role in the cytoplasmic cytoskeleton, the Arp2/3 complex also promotes actin polymerization in the nucleus, thereby regulating gene transcription and repair of damaged DNA. The chain is Actin-related protein 2/3 complex subunit 1A (Arpc1a) from Rattus norvegicus (Rat).